The primary structure comprises 890 residues: DNA mismatch repair protein MutS (890 aa).

645 to 652 contacts ATP; that stretch reads GPNMAGKS.

It belongs to the DNA mismatch repair MutS family.

In terms of biological role, this protein is involved in the repair of mismatches in DNA. It is possible that it carries out the mismatch recognition step. This protein has a weak ATPase activity. This is DNA mismatch repair protein MutS from Rickettsia conorii (strain ATCC VR-613 / Malish 7).